The chain runs to 2371 residues: Highly reducing polyketide synthase ntnH (2371 aa).

The Ketosynthase family 3 (KS3) domain occupies 10 to 429; the sequence is PSPIAIVGIG…GANAHVILEG (420 aa). Catalysis depends on for beta-ketoacyl synthase activity residues C180, H316, and H352. Residues 528 to 796 form a malonyl-CoA:ACP transacylase (MAT) domain region; sequence FIFTGQGAQW…NSCLSRGADA (269 aa). The interval 858-986 is N-terminal hotdog fold; the sequence is HELLGARVIG…GKVHPGNAST (129 aa). A dehydratase (DH) domain region spans residues 858–1142; that stretch reads HELLGARVIG…GIRFRILENN (285 aa). The 288-residue stretch at 858–1145 folds into the PKS/mFAS DH domain; that stretch reads HELLGARVIG…FRILENNRSK (288 aa). H890 acts as the Proton acceptor; for dehydratase activity in catalysis. The segment at 1001 to 1145 is C-terminal hotdog fold; it reads VRGVISAKWY…FRILENNRSK (145 aa). D1059 (proton donor; for dehydratase activity) is an active-site residue. Positions 1309–1456 are methyltransferase (CMet) domain; the sequence is FFQLLGHNKK…FENVTAIMDQ (148 aa). The enoyl reductase (ER) (ER) domain stretch occupies residues 1669-1968; that stretch reads GLLSSLQWQG…GHRPIGAICI (300 aa). Positions 1993-2167 are ketoreductase (KR) domain; the sequence is SYVLIGGLGG…ASVIDLGVME (175 aa). The Carrier domain maps to 2280–2362; sequence EDETAVAEFL…DLGKLARSRI (83 aa). S2322 carries the post-translational modification O-(pantetheine 4'-phosphoryl)serine.

The protein operates within secondary metabolite biosynthesis; terpenoid biosynthesis. Highly reducing polyketide synthase; part of the gene cluster that mediates the biosynthesis of the meroterpenoids nectripenoids A and B, as well as cochliquninone D and isocochliquninone E. The pathway probably begins with the HR-PKS ntnH that catalyzes two chain-extension steps to form a reduced triketide, which then primes the SAT domain in the NR-PKS ntnG to initiate three more cycles of extension to give a linear hexaketide corresponding to the polyketide part of nectripenoids. The FAD-dependent monooxygenase ntnJ then performs an oxidative decarboxylation at C11 of the ntnH/ntnG product, via an electrophilic aromatic hydroxylation with concomitant ipso-decarboxylation. The membrane-bound polyprenyl transferase ntnF then introduces a farnesyl group before the FAD-dependent monooxygenase ntnK functions as the first epoxidase on terminal C12'-C13' olefin, followed by a second epoxidation on C7'-C8' catalyzed by ntnA. The terpene cyclase/mutase ntnI then initiates the sequential tricyclic ring formation through protonation of the terminal epoxide and catalyzes the regioselective and stereoselective 6/6/6-tricyclic ring formation. The cytochrome P450 monooxygenase ntnM may then hydroxylate C1'. This chain is Highly reducing polyketide synthase ntnH, found in Nectria sp.